A 153-amino-acid polypeptide reads, in one-letter code: Insulin-like growth factor 1 (153 aa).

The interval 49–77 (GPETLCGAELVDALQFVCGDRGFYFNKPT) is b. 3 cysteine pairs are disulfide-bonded: C54–C96, C66–C109, and C95–C100. Residues 78–89 (GYGSSSRRAPQT) form a c region. An a region spans residues 90–110 (GIVDECCFRSCDLRRLEMYCA). The d stretch occupies residues 111–118 (PLKPAKSA). Residues 119–153 (RSVRAQRHTDMPKAQKEVHLKNASRGSAGNKNYRM) constitute a propeptide, e peptide. The interval 120–153 (SVRAQRHTDMPKAQKEVHLKNASRGSAGNKNYRM) is disordered. Over residues 125-138 (RHTDMPKAQKEVHL) the composition is skewed to basic and acidic residues. The segment covering 142–153 (SRGSAGNKNYRM) has biased composition (polar residues).

It belongs to the insulin family. As to quaternary structure, forms a ternary complex with IGFR1 and ITGAV:ITGB3. Forms a ternary complex with IGFR1 and ITGA6:ITGB4. Forms a ternary complex with IGFBP3 and ALS.

It is found in the secreted. In terms of biological role, the insulin-like growth factors, isolated from plasma, are structurally and functionally related to insulin but have a much higher growth-promoting activity. May be a physiological regulator of [1-14C]-2-deoxy-D-glucose (2DG) transport and glycogen synthesis in osteoblasts. Stimulates glucose transport in bone-derived osteoblastic (PyMS) cells and is effective at much lower concentrations than insulin, not only regarding glycogen and DNA synthesis but also with regard to enhancing glucose uptake. May play a role in synapse maturation. Ca(2+)-dependent exocytosis of IGF1 is required for sensory perception of smell in the olfactory bulb. Acts as a ligand for IGF1R. Binds to the alpha subunit of IGF1R, leading to the activation of the intrinsic tyrosine kinase activity which autophosphorylates tyrosine residues in the beta subunit thus initiating a cascade of down-stream signaling events leading to activation of the PI3K-AKT/PKB and the Ras-MAPK pathways. Binds to integrins ITGAV:ITGB3 and ITGA6:ITGB4. Its binding to integrins and subsequent ternary complex formation with integrins and IGFR1 are essential for IGF1 signaling. Induces the phosphorylation and activation of IGFR1, MAPK3/ERK1, MAPK1/ERK2 and AKT1. As part of the MAPK/ERK signaling pathway, acts as a negative regulator of apoptosis in cardiomyocytes via promotion of STUB1/CHIP-mediated ubiquitination and degradation of ICER-type isoforms of CREM. This Rhinopithecus roxellana (Golden snub-nosed monkey) protein is Insulin-like growth factor 1.